Reading from the N-terminus, the 591-residue chain is Proteasome-associated ATPase (591 aa).

Residues 8-77 (DSVAAARELE…LREEVDRLGQ (70 aa)) adopt a coiled-coil conformation. Residue 278–283 (GCGKTL) coordinates ATP. Residues 590–591 (YL) form a docks into pockets in the proteasome alpha-ring region.

Belongs to the AAA ATPase family. Homohexamer. Assembles into a hexameric ring structure that caps the 20S proteasome core. Strongly interacts with the prokaryotic ubiquitin-like protein Pup through a hydrophobic interface; the interacting region of ARC lies in its N-terminal coiled-coil domain. There is one Pup binding site per ARC hexamer ring. Upon ATP-binding, the C-terminus of ARC interacts with the alpha-rings of the proteasome core, possibly by binding to the intersubunit pockets.

The protein operates within protein degradation; proteasomal Pup-dependent pathway. In terms of biological role, ATPase which is responsible for recognizing, binding, unfolding and translocation of pupylated proteins into the bacterial 20S proteasome core particle. May be essential for opening the gate of the 20S proteasome via an interaction with its C-terminus, thereby allowing substrate entry and access to the site of proteolysis. Thus, the C-termini of the proteasomal ATPase may function like a 'key in a lock' to induce gate opening and therefore regulate proteolysis. This chain is Proteasome-associated ATPase, found in Rhodococcus jostii (strain RHA1).